Reading from the N-terminus, the 433-residue chain is Xylose isomerase (433 aa).

Residues His-99 and Asp-102 contribute to the active site. Mg(2+) is bound by residues Glu-230, Glu-266, His-269, Asp-294, Asp-305, Asp-307, and Asp-337.

It belongs to the xylose isomerase family. In terms of assembly, homotetramer. Mg(2+) serves as cofactor.

It is found in the cytoplasm. It catalyses the reaction alpha-D-xylose = alpha-D-xylulofuranose. In Cereibacter sphaeroides (strain ATCC 17025 / ATH 2.4.3) (Rhodobacter sphaeroides), this protein is Xylose isomerase.